Reading from the N-terminus, the 350-residue chain is Phospho-2-dehydro-3-deoxyheptonate aldolase, Phe-sensitive (350 aa).

N6-acetyllysine is present on lysine 244.

This sequence belongs to the class-I DAHP synthase family. Homotetramer.

It carries out the reaction D-erythrose 4-phosphate + phosphoenolpyruvate + H2O = 7-phospho-2-dehydro-3-deoxy-D-arabino-heptonate + phosphate. It functions in the pathway metabolic intermediate biosynthesis; chorismate biosynthesis; chorismate from D-erythrose 4-phosphate and phosphoenolpyruvate: step 1/7. Its function is as follows. Stereospecific condensation of phosphoenolpyruvate (PEP) and D-erythrose-4-phosphate (E4P) giving rise to 3-deoxy-D-arabino-heptulosonate-7-phosphate (DAHP). This chain is Phospho-2-dehydro-3-deoxyheptonate aldolase, Phe-sensitive (aroG), found in Escherichia coli O157:H7.